Reading from the N-terminus, the 557-residue chain is Dihydroxy-acid dehydratase (557 aa).

Cys50 provides a ligand contact to [2Fe-2S] cluster. Asp82 is a Mg(2+) binding site. Position 123 (Cys123) interacts with [2Fe-2S] cluster. Residues Asp124 and Lys125 each contribute to the Mg(2+) site. Lys125 bears the N6-carboxylysine mark. A [2Fe-2S] cluster-binding site is contributed by Cys195. Residue Glu447 coordinates Mg(2+). Ser473 functions as the Proton acceptor in the catalytic mechanism.

It belongs to the IlvD/Edd family. In terms of assembly, homodimer. Requires [2Fe-2S] cluster as cofactor. It depends on Mg(2+) as a cofactor.

The catalysed reaction is (2R)-2,3-dihydroxy-3-methylbutanoate = 3-methyl-2-oxobutanoate + H2O. It carries out the reaction (2R,3R)-2,3-dihydroxy-3-methylpentanoate = (S)-3-methyl-2-oxopentanoate + H2O. It functions in the pathway amino-acid biosynthesis; L-isoleucine biosynthesis; L-isoleucine from 2-oxobutanoate: step 3/4. The protein operates within amino-acid biosynthesis; L-valine biosynthesis; L-valine from pyruvate: step 3/4. Functionally, functions in the biosynthesis of branched-chain amino acids. Catalyzes the dehydration of (2R,3R)-2,3-dihydroxy-3-methylpentanoate (2,3-dihydroxy-3-methylvalerate) into 2-oxo-3-methylpentanoate (2-oxo-3-methylvalerate) and of (2R)-2,3-dihydroxy-3-methylbutanoate (2,3-dihydroxyisovalerate) into 2-oxo-3-methylbutanoate (2-oxoisovalerate), the penultimate precursor to L-isoleucine and L-valine, respectively. In Nitrosomonas eutropha (strain DSM 101675 / C91 / Nm57), this protein is Dihydroxy-acid dehydratase.